Consider the following 460-residue polypeptide: Adenosylhomocysteinase (460 aa).

Residues Thr83, Asp158, and Glu184 each coordinate substrate. Residue 185-187 participates in NAD(+) binding; that stretch reads TTT. Residues Lys214 and Asp218 each contribute to the substrate site. Residues Asn219, 248 to 253, Glu271, 327 to 329, and Asn373 contribute to the NAD(+) site; these read GYGDVG and IGH.

It belongs to the adenosylhomocysteinase family. It depends on NAD(+) as a cofactor.

The protein localises to the cytoplasm. The catalysed reaction is S-adenosyl-L-homocysteine + H2O = L-homocysteine + adenosine. Its pathway is amino-acid biosynthesis; L-homocysteine biosynthesis; L-homocysteine from S-adenosyl-L-homocysteine: step 1/1. Its function is as follows. May play a key role in the regulation of the intracellular concentration of adenosylhomocysteine. The protein is Adenosylhomocysteinase of Bdellovibrio bacteriovorus (strain ATCC 15356 / DSM 50701 / NCIMB 9529 / HD100).